We begin with the raw amino-acid sequence, 480 residues long: ATP synthase subunit beta (480 aa).

An ATP-binding site is contributed by Gly153–Thr160.

This sequence belongs to the ATPase alpha/beta chains family. F-type ATPases have 2 components, CF(1) - the catalytic core - and CF(0) - the membrane proton channel. CF(1) has five subunits: alpha(3), beta(3), gamma(1), delta(1), epsilon(1). CF(0) has three main subunits: a(1), b(2) and c(9-12). The alpha and beta chains form an alternating ring which encloses part of the gamma chain. CF(1) is attached to CF(0) by a central stalk formed by the gamma and epsilon chains, while a peripheral stalk is formed by the delta and b chains.

The protein localises to the cell membrane. The enzyme catalyses ATP + H2O + 4 H(+)(in) = ADP + phosphate + 5 H(+)(out). In terms of biological role, produces ATP from ADP in the presence of a proton gradient across the membrane. The catalytic sites are hosted primarily by the beta subunits. This chain is ATP synthase subunit beta, found in Lactobacillus johnsonii (strain CNCM I-12250 / La1 / NCC 533).